Reading from the N-terminus, the 634-residue chain is Chaperone protein DnaK (634 aa).

At T198 the chain carries Phosphothreonine; by autocatalysis. Residues 599-634 are disordered; sequence KQTQEGAEAASEAGEQSAGDEGVVDAEFEEVDEQNK. Residues 602–619 are compositionally biased toward low complexity; it reads QEGAEAASEAGEQSAGDE. Residues 620 to 634 are compositionally biased toward acidic residues; that stretch reads GVVDAEFEEVDEQNK.

It belongs to the heat shock protein 70 family.

In terms of biological role, acts as a chaperone. The protein is Chaperone protein DnaK of Syntrophotalea carbinolica (strain DSM 2380 / NBRC 103641 / GraBd1) (Pelobacter carbinolicus).